The primary structure comprises 245 residues: MLIIPAIDLKDGACVRLRQGRMEDSTVFSDDPVSMAAKWVEGGCRRLHLVDLNGAFEGQPVNGEVVTAIAKRYPNLPIQIGGGIRSLETIEHYVKAGVSYVIIGTKAVKEPEFVAEACRAFPGKVIVGLDAKDGFVATDGWAEVSSVQVIDLAKRFEADGVSAIVYTDIAKDGMMQGCNVPFTAALAAATRIPVIASGGIHNLGDIKALLDAKAPGIIGAITGRAIYEGTLDVAEAQAFCDSYQG.

Asp-8 serves as the catalytic Proton acceptor. The Proton donor role is filled by Asp-130.

It belongs to the HisA/HisF family.

Its subcellular location is the cytoplasm. It carries out the reaction 1-(5-phospho-beta-D-ribosyl)-5-[(5-phospho-beta-D-ribosylamino)methylideneamino]imidazole-4-carboxamide = 5-[(5-phospho-1-deoxy-D-ribulos-1-ylimino)methylamino]-1-(5-phospho-beta-D-ribosyl)imidazole-4-carboxamide. It functions in the pathway amino-acid biosynthesis; L-histidine biosynthesis; L-histidine from 5-phospho-alpha-D-ribose 1-diphosphate: step 4/9. The polypeptide is 1-(5-phosphoribosyl)-5-[(5-phosphoribosylamino)methylideneamino] imidazole-4-carboxamide isomerase (Pseudomonas fluorescens (strain ATCC BAA-477 / NRRL B-23932 / Pf-5)).